The sequence spans 455 residues: MDTNNNIEKEILALAKQKVSPIEYENCLSQLKYNPNASKSDIAFFYAPNTLLCNWITAKYGTLLKEILSQNKVGMHLAHSVDVRIEVAPKIQISTQSNINYKATKMSVKDSYTFENFVVGSCNNTVYEIAKKVAQSDTPPYNPVLFYGGTGLGKTHILNAIGNHALEKHKKVVLVTSEDFLTDFLKHLDNKTMDSFKAKYRHCDFFLLDDAQFLQGKPKLEEEFFHTFNELHANSKQIVLISDRSPKNIAGLEDRLKSRFEWGITAKVMPPDLETKLSIVKQKCQLNQIILPEEVMEYIAQHISDNIRQMEGAIIKISVNANLMNASIDLNLAKTVLEDLQKDHAEGSSLENILLAVAQSLNLKSSEIKVSSRQKNVALARKLVVYFARLYTPNPTLSLAQFLDLKDHSSISKMYSSVKKMLEEEKSPFILSLREEIKNRLNELNDKKTAFNSSE.

A domain I, interacts with DnaA modulators region spans residues 1-75 (MDTNNNIEKE…EILSQNKVGM (75 aa)). The domain II stretch occupies residues 75-106 (MHLAHSVDVRIEVAPKIQISTQSNINYKATKM). A domain III, AAA+ region region spans residues 107–321 (SVKDSYTFEN…GAIIKISVNA (215 aa)). ATP is bound by residues Gly-151, Gly-153, Lys-154, and Thr-155. A domain IV, binds dsDNA region spans residues 322-455 (NLMNASIDLN…DKKTAFNSSE (134 aa)).

It belongs to the DnaA family. Oligomerizes as a right-handed, spiral filament on DNA at oriC.

It is found in the cytoplasm. Functionally, plays an essential role in the initiation and regulation of chromosomal replication. ATP-DnaA binds to the origin of replication (oriC) to initiate formation of the DNA replication initiation complex once per cell cycle. Binds the DnaA box (a 9 base pair repeat at the origin) and separates the double-stranded (ds)DNA. Forms a right-handed helical filament on oriC DNA; dsDNA binds to the exterior of the filament while single-stranded (ss)DNA is stabiized in the filament's interior. The ATP-DnaA-oriC complex binds and stabilizes one strand of the AT-rich DNA unwinding element (DUE), permitting loading of DNA polymerase. After initiation quickly degrades to an ADP-DnaA complex that is not apt for DNA replication. Binds acidic phospholipids. The sequence is that of Chromosomal replication initiator protein DnaA from Helicobacter pylori (strain HPAG1).